The sequence spans 529 residues: Laccase-1 (529 aa).

The signal sequence occupies residues 1–23; the sequence is MFPGARILATLTLALHLLHGTHA. 3 consecutive Plastocyanin-like domains span residues 25-159, 170-312, and 380-499; these read IGPT…FIVY, DVDN…ILRY, and TAPV…FAED. Residue Asn57 is glycosylated (N-linked (GlcNAc...) asparagine). Cu cation contacts are provided by His96, His98, His141, and His143. Intrachain disulfides connect Cys117-Cys514 and Cys149-Cys236. N-linked (GlcNAc...) asparagine glycosylation is found at Asn239 and Asn282. Positions 425, 428, 430, 481, 482, 483, and 487 each coordinate Cu cation.

It belongs to the multicopper oxidase family. Cu cation is required as a cofactor.

It localises to the secreted. It carries out the reaction 4 hydroquinone + O2 = 4 benzosemiquinone + 2 H2O. Lignin degradation and detoxification of lignin-derived products. This is Laccase-1 (POX1) from Pleurotus ostreatus (Oyster mushroom).